Here is a 1007-residue protein sequence, read N- to C-terminus: Tolloid-like protein 1 (1007 aa).

An N-terminal signal peptide occupies residues 1–25 (MNMPSWLIFLLTGWTFCGNFFACGG). Residues 26–142 (LDYDYPNYEN…GKSKKIRIPR (117 aa)) constitute a propeptide that is removed on maturation. The interval 115–139 (SGQENTTANSQKVDNNQSGKSKKIR) is disordered. Polar residues predominate over residues 116 to 133 (GQENTTANSQKVDNNQSG). A Peptidase M12A domain is found at 143–342 (AATSRTERIW…AQARKLYRCP (200 aa)). A glycan (N-linked (GlcNAc...) asparagine) is linked at Asn-164. 4 disulfide bridges follow: Cys-185–Cys-341, Cys-205–Cys-227, Cys-207–Cys-208, and Cys-344–Cys-370. His-235 is a binding site for Zn(2+). Glu-236 is a catalytic residue. Zn(2+) contacts are provided by His-239 and His-245. 2 CUB domains span residues 344 to 456 (CGET…YEAI) and 457 to 569 (CGGE…FLKE). N-linked (GlcNAc...) asparagine glycosylation is found at Asn-354 and Asn-385. 15 cysteine pairs are disulfide-bonded: Cys-397/Cys-419, Cys-457/Cys-483, Cys-510/Cys-532, Cys-573/Cys-585, Cys-581/Cys-594, Cys-596/Cys-609, Cys-613/Cys-639, Cys-666/Cys-688, Cys-729/Cys-740, Cys-736/Cys-749, Cys-751/Cys-764, Cys-769/Cys-795, Cys-822/Cys-844, Cys-882/Cys-912, and Cys-939/Cys-961. Residues 569 to 610 (EEDECARPDNGGCEQRCVNTLGSYKCSCDPGYELAPDKKSCE) form the EGF-like 1; calcium-binding domain. Residues 613–725 (CGGLLTKLNG…KGFRAHFFSD (113 aa)) enclose the CUB 3 domain. A glycan (N-linked (GlcNAc...) asparagine) is linked at Asn-621. In terms of domain architecture, EGF-like 2; calcium-binding spans 725–765 (DKDECSKDNGGCQHECINTIGSYVCQCRNGFVLHDNKHDCK). CUB domains are found at residues 769 to 881 (CEHR…HSTE) and 882 to 998 (CGGR…YRSV).

Zn(2+) serves as cofactor.

It is found in the secreted. In terms of biological role, protease which processes procollagen C-propeptides, such as chordin. Required for the embryonic development. Predominant protease, which in the development, influences dorsal-ventral patterning and skeletogenesis. This chain is Tolloid-like protein 1 (tll1), found in Xenopus laevis (African clawed frog).